The following is a 194-amino-acid chain: Inosine triphosphate pyrophosphatase (194 aa).

10–15 lines the ITP pocket; it reads TTNLKK. Residue glutamate 36 coordinates Mg(2+). ITP contacts are provided by residues lysine 48, 66-67, lysine 83, lysine 166, and 171-172; these read DT and HR.

The protein belongs to the HAM1 NTPase family. In terms of assembly, homodimer. The cofactor is Mg(2+). Mn(2+) is required as a cofactor.

It localises to the cytoplasm. The protein resides in the nucleus. It catalyses the reaction ITP + H2O = IMP + diphosphate + H(+). The catalysed reaction is dITP + H2O = dIMP + diphosphate + H(+). The enzyme catalyses XTP + H2O = XMP + diphosphate + H(+). Pyrophosphatase that hydrolyzes non-canonical purine nucleotides such as inosine triphosphate (ITP), deoxyinosine triphosphate (dITP) or xanthosine 5'-triphosphate (XTP) to their respective monophosphate derivatives. The enzyme does not distinguish between the deoxy- and ribose forms. Probably excludes non-canonical purines from RNA and DNA precursor pools, thus preventing their incorporation into RNA and DNA and avoiding chromosomal lesions. The protein is Inosine triphosphate pyrophosphatase of Encephalitozoon intestinalis (strain ATCC 50506) (Microsporidian parasite).